The following is a 450-amino-acid chain: Tubulin alpha-3E chain (450 aa).

Residues 1-4 (MREC) carry the MREC motif motif. Glutamine 11 contacts GTP. The residue at position 40 (lysine 40) is an N6-acetyllysine. Residues glutamate 71, serine 140, glycine 144, threonine 145, threonine 179, asparagine 206, and asparagine 228 each contribute to the GTP site. Glutamate 71 serves as a coordination point for Mg(2+). The active site involves glutamate 254. Residue tyrosine 282 is modified to 3'-nitrotyrosine. Position 439 is a phosphoserine (serine 439). Tyrosine 450 carries the post-translational modification 3'-nitrotyrosine.

Belongs to the tubulin family. As to quaternary structure, dimer of alpha and beta chains. A typical microtubule is a hollow water-filled tube with an outer diameter of 25 nm and an inner diameter of 15 nM. Alpha-beta heterodimers associate head-to-tail to form protofilaments running lengthwise along the microtubule wall with the beta-tubulin subunit facing the microtubule plus end conferring a structural polarity. Microtubules usually have 13 protofilaments but different protofilament numbers can be found in some organisms and specialized cells. Requires Mg(2+) as cofactor. In terms of processing, some glutamate residues at the C-terminus are polyglutamylated, resulting in polyglutamate chains on the gamma-carboxyl group. Polyglutamylation plays a key role in microtubule severing by spastin (SPAST). SPAST preferentially recognizes and acts on microtubules decorated with short polyglutamate tails: severing activity by SPAST increases as the number of glutamates per tubulin rises from one to eight, but decreases beyond this glutamylation threshold. Glutamylation is also involved in cilia motility. Post-translationally, some glutamate residues at the C-terminus are monoglycylated but not polyglycylated due to the absence of functional TTLL10 in human. Monoglycylation is mainly limited to tubulin incorporated into cilia and flagella axonemes, which is required for their stability and maintenance. Flagella glycylation controls sperm motility. Both polyglutamylation and monoglycylation can coexist on the same protein on adjacent residues, and lowering glycylation levels increases polyglutamylation, and reciprocally. Acetylation of alpha chains at Lys-40 is located inside the microtubule lumen. This modification has been correlated with increased microtubule stability, intracellular transport and ciliary assembly. In terms of processing, methylation of alpha chains at Lys-40 is found in mitotic microtubules and is required for normal mitosis and cytokinesis contributing to genomic stability. Post-translationally, nitration of Tyr-450 is irreversible and interferes with normal dynein intracellular distribution. Undergoes a tyrosination/detyrosination cycle, the cyclic removal and re-addition of a C-terminal tyrosine residue by the enzymes tubulin tyrosine carboxypeptidase (MATCAP1/KIAA0895L, VASH1 or VASH2) and tubulin tyrosine ligase (TTL), respectively. In terms of processing, tyrosination promotes microtubule interaction with CAP-Gly domain-containing proteins such as CLIP1, CLIP2 and DCTN1. Tyrosination regulates the initiation of dynein-dynactin motility via interaction with DCTN1, which brings the dynein-dynactin complex into contact with microtubules. In neurons, tyrosinated tubulins mediate the initiation of retrograde vesicle transport. Post-translationally, detyrosination is involved in metaphase plate congression by guiding chromosomes during mitosis: detyrosination promotes interaction with CENPE, promoting pole-proximal transport of chromosomes toward the equator. Detyrosination increases microtubules-dependent mechanotransduction in dystrophic cardiac and skeletal muscle. In cardiomyocytes, detyrosinated microtubules are required to resist to contractile compression during contraction: detyrosination promotes association with desmin (DES) at force-generating sarcomeres, leading to buckled microtubules and mechanical resistance to contraction.

Its subcellular location is the cytoplasm. The protein resides in the cytoskeleton. The enzyme catalyses GTP + H2O = GDP + phosphate + H(+). Functionally, tubulin is the major constituent of microtubules, a cylinder consisting of laterally associated linear protofilaments composed of alpha- and beta-tubulin heterodimers. Microtubules grow by the addition of GTP-tubulin dimers to the microtubule end, where a stabilizing cap forms. Below the cap, tubulin dimers are in GDP-bound state, owing to GTPase activity of alpha-tubulin. This is Tubulin alpha-3E chain (TUBA3E) from Homo sapiens (Human).